We begin with the raw amino-acid sequence, 426 residues long: Tryptophan--tRNA ligase (426 aa).

A 'HIGH' region motif is present at residues 66–74 (PSGEMHLGN). The 'KMSKS' region signature appears at 314-318 (KMSSS).

This sequence belongs to the class-I aminoacyl-tRNA synthetase family.

The protein localises to the cytoplasm. The catalysed reaction is tRNA(Trp) + L-tryptophan + ATP = L-tryptophyl-tRNA(Trp) + AMP + diphosphate + H(+). This is Tryptophan--tRNA ligase from Thermoplasma acidophilum (strain ATCC 25905 / DSM 1728 / JCM 9062 / NBRC 15155 / AMRC-C165).